A 411-amino-acid polypeptide reads, in one-letter code: Serine hydroxymethyltransferase (411 aa).

Residue 120–122 participates in (6S)-5,6,7,8-tetrahydrofolate binding; that stretch reads GHL. At Lys225 the chain carries N6-(pyridoxal phosphate)lysine. Position 350–352 (350–352) interacts with (6S)-5,6,7,8-tetrahydrofolate; the sequence is SPF.

Belongs to the SHMT family. In terms of assembly, homodimer. Pyridoxal 5'-phosphate is required as a cofactor.

The protein resides in the cytoplasm. It carries out the reaction (6R)-5,10-methylene-5,6,7,8-tetrahydrofolate + glycine + H2O = (6S)-5,6,7,8-tetrahydrofolate + L-serine. Its pathway is one-carbon metabolism; tetrahydrofolate interconversion. The protein operates within amino-acid biosynthesis; glycine biosynthesis; glycine from L-serine: step 1/1. In terms of biological role, catalyzes the reversible interconversion of serine and glycine with tetrahydrofolate (THF) serving as the one-carbon carrier. This reaction serves as the major source of one-carbon groups required for the biosynthesis of purines, thymidylate, methionine, and other important biomolecules. Also exhibits THF-independent aldolase activity toward beta-hydroxyamino acids, producing glycine and aldehydes, via a retro-aldol mechanism. The chain is Serine hydroxymethyltransferase from Lactobacillus johnsonii (strain CNCM I-12250 / La1 / NCC 533).